A 495-amino-acid chain; its full sequence is Trimethylamine methyltransferase MttB1 (495 aa).

A non-standard amino acid (pyrrolysine) is located at residue O334.

This sequence belongs to the trimethylamine methyltransferase family. In terms of assembly, can form a complex with MttC.

The catalysed reaction is Co(I)-[trimethylamine-specific corrinoid protein] + trimethylamine + H(+) = methyl-Co(III)-[trimethylamine-specific corrinoid protein] + dimethylamine. Its pathway is one-carbon metabolism; methanogenesis from trimethylamine. Its function is as follows. Catalyzes the transfer of a methyl group from trimethylamine to the corrinoid cofactor of MttC. The protein is Trimethylamine methyltransferase MttB1 (mttB1) of Methanosarcina acetivorans (strain ATCC 35395 / DSM 2834 / JCM 12185 / C2A).